Reading from the N-terminus, the 263-residue chain is Shikimate dehydrogenase (NADP(+)) (263 aa).

Residues 21 to 23 and threonine 67 contribute to the shikimate site; that span reads TLS. Lysine 71 (proton acceptor) is an active-site residue. Glutamate 83 is a binding site for NADP(+). 2 residues coordinate shikimate: asparagine 92 and aspartate 103. Residues 126–130 and leucine 204 each bind NADP(+); that span reads GAGGA. Tyrosine 206 lines the shikimate pocket. Glycine 227 contributes to the NADP(+) binding site.

This sequence belongs to the shikimate dehydrogenase family. As to quaternary structure, homodimer.

The catalysed reaction is shikimate + NADP(+) = 3-dehydroshikimate + NADPH + H(+). It participates in metabolic intermediate biosynthesis; chorismate biosynthesis; chorismate from D-erythrose 4-phosphate and phosphoenolpyruvate: step 4/7. Involved in the biosynthesis of the chorismate, which leads to the biosynthesis of aromatic amino acids. Catalyzes the reversible NADPH linked reduction of 3-dehydroshikimate (DHSA) to yield shikimate (SA). The chain is Shikimate dehydrogenase (NADP(+)) from Sulfolobus acidocaldarius (strain ATCC 33909 / DSM 639 / JCM 8929 / NBRC 15157 / NCIMB 11770).